The sequence spans 1634 residues: Phosphatidylinositol 4-phosphate 3-kinase C2 domain-containing subunit beta (1634 aa).

An interaction with GRB2 region spans residues 2–298 (SSTQGNGEHW…YASRYGNRKN (297 aa)). Disordered stretches follow at residues 45–188 (EENR…QPSD) and 259–315 (GRGP…VGSR). The segment covering 87–112 (SDPTLNYNSLSPQEGPPNHSTSQGPQ) has biased composition (polar residues). Residues 176–187 (GSPSSSKISQPS) show a composition bias toward low complexity. The segment covering 259–270 (GRGPLDFSKDTS) has biased composition (basic and acidic residues). The 89-residue stretch at 375–463 (EVNLKVTVLC…DIDIRLQLME (89 aa)) folds into the PI3K-RBD domain. In terms of domain architecture, C2 PI3K-type spans 635 to 786 (VYATHRIPII…DSVILQIDFP (152 aa)). Positions 805-981 (RYEFGSLREE…QYLLAALLCC (177 aa)) constitute a PIK helical domain. A PI3K/PI4K catalytic domain is found at 1050–1328 (VPRDCSYFNS…LIESSLGSVA (279 aa)). The interval 1056–1062 (YFNSNAV) is G-loop. The interval 1192-1200 (GICDRHNDN) is catalytic loop. Residues 1211-1237 (HIDFGRFLGHAQMFGNIKRDRAPFVFT) are activation loop. The PX domain maps to 1365-1481 (GRISDVFLCR…TFFHPLPRDE (117 aa)). The C2 domain occupies 1504–1624 (VGGEVKLSIS…DLAQEKTGWF (121 aa)).

This sequence belongs to the PI3/PI4-kinase family. Part of a complex with ERBB2 and EGFR. Part of a complex with phosphorylated EGFR and GRB2. Interacts with phosphorylated EGFR and PDGFR, maybe indirectly. Interacts with GRB2. Ca(2+) serves as cofactor. It depends on Mg(2+) as a cofactor. Requires Mn(2+) as cofactor. As to expression, expressed in columnar and transitional epithelia, mononuclear cells, and ganglion cells (at protein level). Widely expressed, with highest levels in thymus and placenta and lowest in peripheral blood, skeletal muscle and kidney.

It is found in the microsome. It localises to the cell membrane. Its subcellular location is the cytoplasm. The protein localises to the cytosol. The protein resides in the nucleus. It is found in the endoplasmic reticulum. The enzyme catalyses a 1,2-diacyl-sn-glycero-3-phospho-(1D-myo-inositol 4-phosphate) + ATP = a 1,2-diacyl-sn-glycero-3-phospho-(1D-myo-inositol-3,4-bisphosphate) + ADP + H(+). It catalyses the reaction a 1,2-diacyl-sn-glycero-3-phospho-(1D-myo-inositol) + ATP = a 1,2-diacyl-sn-glycero-3-phospho-(1D-myo-inositol-3-phosphate) + ADP + H(+). Its activity is regulated as follows. Activated by GRB2. In terms of biological role, phosphorylates PtdIns and PtdIns4P with a preference for PtdIns. Does not phosphorylate PtdIns(4,5)P2. May be involved in EGF and PDGF signaling cascades. This Homo sapiens (Human) protein is Phosphatidylinositol 4-phosphate 3-kinase C2 domain-containing subunit beta (PIK3C2B).